Here is a 257-residue protein sequence, read N- to C-terminus: Uroplakin-1a (257 aa).

The Cytoplasmic portion of the chain corresponds to 1-13; sequence MASAATEGEKGSP. Residues 14-34 traverse the membrane as a helical segment; it reads VVVGLLVVGNIIILLSGLALF. The Extracellular portion of the chain corresponds to 35 to 58; sequence AETVWVTADQYRVYPLMGVSGKDD. A helical membrane pass occupies residues 59–85; it reads VFAGAWIAIFCGFSFFVVASFGVGAAL. The Cytoplasmic portion of the chain corresponds to 86–90; it reads CRRRY. The chain crosses the membrane as a helical span at residues 91-111; it reads MILTYLLLMLIVYIFECASCI. At 112–229 the chain is on the extracellular side; it reads TSYTHRDYMV…HIGHAIDSYT (118 aa). Residue N169 is glycosylated (N-linked (GlcNAc...) asparagine). A helical transmembrane segment spans residues 230 to 251; that stretch reads WGISWFGFAILMWTLPVMLIAM. Residues 252–257 lie on the Cytoplasmic side of the membrane; the sequence is YFYTTL.

This sequence belongs to the tetraspanin (TM4SF) family. In terms of assembly, homodimer; disulfide-linked. Interacts with uroplakin-2 (UPK2). Binds to uropathogenic E.coli fimH.

Its subcellular location is the membrane. Component of the asymmetric unit membrane (AUM); a highly specialized biomembrane elaborated by terminally differentiated urothelial cells. May play an important role in normal bladder epithelial physiology, possibly in regulating membrane permeability of superficial umbrella cells or in stabilizing the apical membrane through AUM/cytoskeletal interactions. In Mus musculus (Mouse), this protein is Uroplakin-1a (Upk1a).